The chain runs to 142 residues: Large ribosomal subunit protein uL11 (142 aa).

This sequence belongs to the universal ribosomal protein uL11 family. Part of the ribosomal stalk of the 50S ribosomal subunit. Interacts with L10 and the large rRNA to form the base of the stalk. L10 forms an elongated spine to which L12 dimers bind in a sequential fashion forming a multimeric L10(L12)X complex. One or more lysine residues are methylated.

Functionally, forms part of the ribosomal stalk which helps the ribosome interact with GTP-bound translation factors. In Desulforudis audaxviator (strain MP104C), this protein is Large ribosomal subunit protein uL11.